Consider the following 911-residue polypeptide: General transcription factor 3C polypeptide 2 (911 aa).

2 disordered regions span residues 24–187 (DSPG…RRRA) and 205–297 (ALPA…MAPN). The span at 35 to 46 (DVKTSSEMTSAE) shows a compositional bias: polar residues. Residue Ser-63 is modified to Phosphoserine. The span at 64–81 (PDQRRLPPEQESLSRLEQ) shows a compositional bias: basic and acidic residues. The segment covering 92–112 (SKPRASKPGRKRGGRTRKGPK) has biased composition (basic residues). Positions 114–123 (PQQPNPPSAP) are enriched in pro residues. Ser-132, Ser-165, Ser-167, Ser-220, and Ser-260 each carry phosphoserine. Positions 253–262 (EAEDVEESEG) are enriched in acidic residues. Residues 263-277 (PSESSSEPEPVVPRS) are compositionally biased toward low complexity. WD repeat units follow at residues 366–426 (PEDG…MNET), 427–483 (HPLS…AWEL), 484–535 (PGTP…IYKV), 536–603 (QCVA…SLKL), 604–654 (YPFQ…NSIK), and 655–690 (RFLS…HYID). Ser-597 carries the phosphoserine modification. The interval 765–785 (SPEGPDHSSASSGVPNPPKAR) is disordered. Phosphoserine occurs at positions 871, 892, and 893. The tract at residues 889 to 911 (FQPSSPTRRPGFSPTSHRLLPTP) is disordered. Thr-895 bears the Phosphothreonine mark. The residue at position 901 (Ser-901) is a Phosphoserine.

As to quaternary structure, part of the TFIIIC subcomplex TFIIIC2, consisting of six subunits, GTF3C1, GTF3C2, GTF3C3, GTF3C4, GTF3C5 and GTF3C6.

It localises to the nucleus. Its function is as follows. Required for RNA polymerase III-mediated transcription. Component of TFIIIC that initiates transcription complex assembly on tRNA and is required for transcription of 5S rRNA and other stable nuclear and cytoplasmic RNAs. May play a direct role in stabilizing interactions of TFIIIC2 with TFIIIC1. This chain is General transcription factor 3C polypeptide 2 (GTF3C2), found in Homo sapiens (Human).